The chain runs to 445 residues: Potassium/proton antiporter CemA (445 aa).

Helical transmembrane passes span 44-64, 330-350, 368-388, and 405-425; these read MQVSVVTFLTLVLVPLGVNIC, ALTCITITFLFFGLKVQILIL, LIIIIVTDLLVGYHSPQGWKL, and FILCFIGTFPVILDTIFKYWI.

The protein belongs to the CemA family.

Its subcellular location is the plastid. The protein localises to the chloroplast inner membrane. The catalysed reaction is K(+)(in) + H(+)(out) = K(+)(out) + H(+)(in). In terms of biological role, contributes to K(+)/H(+) antiport activity by supporting proton efflux to control proton extrusion and homeostasis in chloroplasts in a light-dependent manner to modulate photosynthesis. Prevents excessive induction of non-photochemical quenching (NPQ) under continuous-light conditions. Indirectly promotes efficient inorganic carbon uptake into chloroplasts. This chain is Potassium/proton antiporter CemA, found in Pleurastrum terricola (Filamentous green alga).